The primary structure comprises 197 residues: ATP-dependent Clp protease proteolytic subunit (197 aa).

Catalysis depends on Ser-98, which acts as the Nucleophile. Residue His-123 is part of the active site.

This sequence belongs to the peptidase S14 family. In terms of assembly, fourteen ClpP subunits assemble into 2 heptameric rings which stack back to back to give a disk-like structure with a central cavity, resembling the structure of eukaryotic proteasomes.

It is found in the cytoplasm. The enzyme catalyses Hydrolysis of proteins to small peptides in the presence of ATP and magnesium. alpha-casein is the usual test substrate. In the absence of ATP, only oligopeptides shorter than five residues are hydrolyzed (such as succinyl-Leu-Tyr-|-NHMec, and Leu-Tyr-Leu-|-Tyr-Trp, in which cleavage of the -Tyr-|-Leu- and -Tyr-|-Trp bonds also occurs).. In terms of biological role, cleaves peptides in various proteins in a process that requires ATP hydrolysis. Has a chymotrypsin-like activity. Plays a major role in the degradation of misfolded proteins. In Enterococcus faecalis (strain ATCC 700802 / V583), this protein is ATP-dependent Clp protease proteolytic subunit.